A 125-amino-acid polypeptide reads, in one-letter code: Large ribosomal subunit protein bL12 (125 aa).

This sequence belongs to the bacterial ribosomal protein bL12 family. As to quaternary structure, homodimer. Part of the ribosomal stalk of the 50S ribosomal subunit. Forms a multimeric L10(L12)X complex, where L10 forms an elongated spine to which 2 to 4 L12 dimers bind in a sequential fashion. Binds GTP-bound translation factors.

Functionally, forms part of the ribosomal stalk which helps the ribosome interact with GTP-bound translation factors. Is thus essential for accurate translation. This Campylobacter jejuni subsp. jejuni serotype O:2 (strain ATCC 700819 / NCTC 11168) protein is Large ribosomal subunit protein bL12.